The primary structure comprises 2197 residues: RNA1 polyprotein (2197 aa).

The Cytoplasmic portion of the chain corresponds to 621-1167 (GLTDVFGVPL…YDWVYANGGK (547 aa)). An SF3 helicase domain is found at 766–933 (VKRLSDLHKR…EGVAYNPSDP (168 aa)). Residue 796-803 (GGPRCGKS) participates in ATP binding. Residues 1168 to 1188 (LLLVLAAVILILFFGSACIKL) traverse the membrane as a helical segment. At 1189 to 1212 (MQAIFCGAAGGTVSMAAVGKMTVQ) the chain is on the lumenal side. The N-linked (GlcNAc...) asparagine; by host glycan is linked to asparagine 1228. The region spanning 1243–1475 (LAEAQFNESH…MPRYISHASF (233 aa)) is the Peptidase C3 domain. Active-site for picornain 3C-like protease activity residues include histidine 1283, glutamate 1331, and cysteine 1433. The region spanning 1765–1888 (SVALNCDYSR…SIKPDTMKYF (124 aa)) is the RdRp catalytic domain.

It belongs to the nepoviruses RNA1 polyprotein family. In terms of processing, specific enzymatic cleavages by picornain 3C-like protease in vivo yield mature proteins. Picornain 3C-like protease is autocatalytically processed. NTB exists as NTB-VPg polyprotein as well as NTB mature protein. Post-translationally, VPg is uridylylated by the polymerase and is covalently linked to the 5'-end of genomic RNA. This uridylylated form acts as a nucleotide-peptide primer for the polymerase.

The protein localises to the host endoplasmic reticulum lumen. Its subcellular location is the host endoplasmic reticulum membrane. It catalyses the reaction RNA(n) + a ribonucleoside 5'-triphosphate = RNA(n+1) + diphosphate. Picornain 3C-like protease is a thiol protease that cleaves at Gln-|-Gly or Gln-|-Ser sites in the P1 and P2 polyproteins. In terms of biological role, the VPg-NTB polyprotein may act as a membrane-anchor for the replication complex. The polypeptide is RNA1 polyprotein (Tomato ringspot virus (isolate raspberry) (ToRSV)).